The chain runs to 487 residues: N-succinylglutamate 5-semialdehyde dehydrogenase (487 aa).

221-226 (GSSDTG) lines the NAD(+) pocket. Residues Glu244 and Cys278 contribute to the active site.

The protein belongs to the aldehyde dehydrogenase family. AstD subfamily.

It carries out the reaction N-succinyl-L-glutamate 5-semialdehyde + NAD(+) + H2O = N-succinyl-L-glutamate + NADH + 2 H(+). Its pathway is amino-acid degradation; L-arginine degradation via AST pathway; L-glutamate and succinate from L-arginine: step 4/5. Functionally, catalyzes the NAD-dependent reduction of succinylglutamate semialdehyde into succinylglutamate. The chain is N-succinylglutamate 5-semialdehyde dehydrogenase from Burkholderia thailandensis (strain ATCC 700388 / DSM 13276 / CCUG 48851 / CIP 106301 / E264).